A 557-amino-acid polypeptide reads, in one-letter code: Ribonuclease J 2 (557 aa).

The Zn(2+) site is built by His-76, His-78, His-144, and Glu-166. Position 366 to 370 (366 to 370 (HASSH)) interacts with substrate.

The protein belongs to the metallo-beta-lactamase superfamily. RNA-metabolizing metallo-beta-lactamase-like family. Bacterial RNase J subfamily. In terms of assembly, homodimer. Component of a possible RNA degradosome complex composed of cshA, eno, pfkA, pnp, rnjA, rnjB, rnpA and rny. Interacts specifically with RNase J1. It depends on Zn(2+) as a cofactor.

The protein localises to the cytoplasm. Functionally, an RNase that has 5'-3' exonuclease and endonuclease activity, with the exonuclease activity probably being most important in vivo. Involved in maturation of 16S rRNA, rnpB (the RNA component of RNase P) maturation and degradation, and mRNA maturation and/or decay. This subunit probably plays a structural rather than enzymatic role as mutation of its putative active site gives no phenotype, and its deletion is partially complemented by inactive RNase J1. The chain is Ribonuclease J 2 from Staphylococcus aureus (strain NCTC 8325 / PS 47).